The primary structure comprises 87 residues: Small ribosomal subunit protein bS16 (87 aa).

It belongs to the bacterial ribosomal protein bS16 family.

This Variovorax paradoxus (strain S110) protein is Small ribosomal subunit protein bS16.